The sequence spans 393 residues: G protein-activated inward rectifier potassium channel 3 (393 aa).

The interval 1 to 23 (MAQENAAFSPGSEEPPRRRGRQR) is disordered. Topologically, residues 1–57 (MAQENAAFSPGSEEPPRRRGRQRYVEKDGRCNVQQGNVRETYRYLTDLFTTLVDLQW) are cytoplasmic. The chain crosses the membrane as a helical span at residues 58-82 (RLSLLFFVLAYALTWLFFGAIWWLI). Over 83–106 (AYGRGDLEHLEDTAWTPCVNNLNG) the chain is Extracellular. The helical; Pore-forming intramembrane region spans 107 to 118 (FVAAFLFSIETE). An intramembrane region (pore-forming) is located at residues 119–125 (TTIGYGH). Residues 120-125 (TIGYGH) carry the Selectivity filter motif. The Extracellular segment spans residues 126-134 (RVITDQCPE). A helical transmembrane segment spans residues 135-156 (GIVLLLLQAILGSMVNAFMVGC). Over 157–393 (MFVKISQPNK…LPPPESESKV (237 aa)) the chain is Cytoplasmic. The interval 360-393 (KVEEEGAGEGAGAGDGADKEHNGCLPPPESESKV) is disordered. The segment covering 384–393 (LPPPESESKV) has biased composition (pro residues). A PDZ-binding motif is present at residues 390–393 (ESKV).

Belongs to the inward rectifier-type potassium channel (TC 1.A.2.1) family. KCNJ9 subfamily. Associates with KCNJ3/GIRK1 to form a G-protein-activated heteromultimer pore-forming unit. Interacts (via PDZ-binding motif) with SNX27 (via PDZ domain); the interaction is required when endocytosed to prevent degradation in lysosomes and promote recycling to the plasma membrane. As to expression, expressed mainly in the brain, some expression in the skeletal muscle.

The protein resides in the membrane. The catalysed reaction is K(+)(in) = K(+)(out). Inward rectifier potassium channels are characterized by a greater tendency to allow potassium to flow into the cell rather than out of it. Their voltage dependence is regulated by the concentration of extracellular potassium; as external potassium is raised, the voltage range of the channel opening shifts to more positive voltages. The inward rectification is mainly due to the blockage of outward current by internal magnesium. This receptor is controlled by G proteins. Unable to produce channel activity when expressed alone. Forms a functional channel in association with KCNJ3/GIRK1. This Mus musculus (Mouse) protein is G protein-activated inward rectifier potassium channel 3 (Kcnj9).